The chain runs to 387 residues: Major outer membrane protein P.IA (387 aa).

An N-terminal signal peptide occupies residues 1–19; the sequence is MRKKLTALVLSALPLAAVA.

It belongs to the Gram-negative porin family. In terms of assembly, homotrimer.

It localises to the cell outer membrane. In terms of biological role, serves as a slightly cation selective porin. Major antigen on the gonococcal cell surface and it may have pathogenic properties in addition to its porin activity. The chain is Major outer membrane protein P.IA (porA) from Neisseria meningitidis serogroup C.